Here is a 103-residue protein sequence, read N- to C-terminus: Co-chaperonin GroES (103 aa).

It belongs to the GroES chaperonin family. In terms of assembly, heptamer of 7 subunits arranged in a ring. Interacts with the chaperonin GroEL.

The protein resides in the plastid. The protein localises to the cyanelle. Functionally, together with the chaperonin GroEL, plays an essential role in assisting protein folding. The GroEL-GroES system forms a nano-cage that allows encapsulation of the non-native substrate proteins and provides a physical environment optimized to promote and accelerate protein folding. GroES binds to the apical surface of the GroEL ring, thereby capping the opening of the GroEL channel. The chain is Co-chaperonin GroES from Cyanophora paradoxa.